A 411-amino-acid chain; its full sequence is Imidazolonepropionase (411 aa).

Residues histidine 75 and histidine 77 each contribute to the Fe(3+) site. Positions 75 and 77 each coordinate Zn(2+). The 4-imidazolone-5-propanoate site is built by arginine 84, tyrosine 147, and histidine 180. Tyrosine 147 provides a ligand contact to N-formimidoyl-L-glutamate. Residue histidine 245 participates in Fe(3+) binding. Histidine 245 provides a ligand contact to Zn(2+). Residue glutamine 248 coordinates 4-imidazolone-5-propanoate. Aspartate 320 contributes to the Fe(3+) binding site. Aspartate 320 is a binding site for Zn(2+). Asparagine 322 and glycine 324 together coordinate N-formimidoyl-L-glutamate. A 4-imidazolone-5-propanoate-binding site is contributed by threonine 325.

The protein belongs to the metallo-dependent hydrolases superfamily. HutI family. It depends on Zn(2+) as a cofactor. Requires Fe(3+) as cofactor.

It is found in the cytoplasm. It carries out the reaction 4-imidazolone-5-propanoate + H2O = N-formimidoyl-L-glutamate. It participates in amino-acid degradation; L-histidine degradation into L-glutamate; N-formimidoyl-L-glutamate from L-histidine: step 3/3. In terms of biological role, catalyzes the hydrolytic cleavage of the carbon-nitrogen bond in imidazolone-5-propanoate to yield N-formimidoyl-L-glutamate. It is the third step in the universal histidine degradation pathway. The polypeptide is Imidazolonepropionase (Photobacterium profundum (strain SS9)).